The primary structure comprises 152 residues: Ribosome maturation factor RimP (152 aa).

The protein belongs to the RimP family.

It localises to the cytoplasm. Required for maturation of 30S ribosomal subunits. The polypeptide is Ribosome maturation factor RimP (Proteus mirabilis (strain HI4320)).